A 412-amino-acid polypeptide reads, in one-letter code: Putative membrane protein 337L (412 aa).

N-linked (GlcNAc...) asparagine; by host glycosylation is found at Asn171, Asn186, Asn247, and Asn271. The chain crosses the membrane as a helical span at residues 387-407; the sequence is VLITGIAVTGVAVLLFLLLMF.

This sequence belongs to the IIV-6 337L family.

It is found in the virion membrane. The protein is Putative membrane protein 337L of Acheta domesticus (House cricket).